Here is a 290-residue protein sequence, read N- to C-terminus: Acetyl-coenzyme A carboxylase carboxyl transferase subunit beta (290 aa).

A CoA carboxyltransferase N-terminal domain is found at 27-290; that stretch reads LWVKCPSCES…LQKQPADAVA (264 aa). Zn(2+) is bound by residues Cys-31, Cys-34, Cys-50, and Cys-53. The segment at 31-53 adopts a C4-type zinc-finger fold; sequence CPSCESTLYRTDVEANLHVCPKC.

Belongs to the AccD/PCCB family. Acetyl-CoA carboxylase is a heterohexamer composed of biotin carboxyl carrier protein (AccB), biotin carboxylase (AccC) and two subunits each of ACCase subunit alpha (AccA) and ACCase subunit beta (AccD). Zn(2+) serves as cofactor.

It localises to the cytoplasm. It catalyses the reaction N(6)-carboxybiotinyl-L-lysyl-[protein] + acetyl-CoA = N(6)-biotinyl-L-lysyl-[protein] + malonyl-CoA. It participates in lipid metabolism; malonyl-CoA biosynthesis; malonyl-CoA from acetyl-CoA: step 1/1. Component of the acetyl coenzyme A carboxylase (ACC) complex. Biotin carboxylase (BC) catalyzes the carboxylation of biotin on its carrier protein (BCCP) and then the CO(2) group is transferred by the transcarboxylase to acetyl-CoA to form malonyl-CoA. This is Acetyl-coenzyme A carboxylase carboxyl transferase subunit beta from Cupriavidus taiwanensis (strain DSM 17343 / BCRC 17206 / CCUG 44338 / CIP 107171 / LMG 19424 / R1) (Ralstonia taiwanensis (strain LMG 19424)).